The primary structure comprises 139 residues: Peptide methionine sulfoxide reductase MsrB (139 aa).

Positions 8-130 constitute a MsrB domain; sequence DQEWRQQLTD…NSASLRFHSA (123 aa). Positions 47, 50, 96, and 99 each coordinate Zn(2+). Residue cysteine 119 is the Nucleophile of the active site.

The protein belongs to the MsrB Met sulfoxide reductase family. Requires Zn(2+) as cofactor.

The enzyme catalyses L-methionyl-[protein] + [thioredoxin]-disulfide + H2O = L-methionyl-(R)-S-oxide-[protein] + [thioredoxin]-dithiol. The sequence is that of Peptide methionine sulfoxide reductase MsrB from Hahella chejuensis (strain KCTC 2396).